Reading from the N-terminus, the 221-residue chain is Ribonuclease T (221 aa).

Positions 21–195 (VVVDVETAGF…YDAEKTADLF (175 aa)) constitute an Exonuclease domain. 4 residues coordinate Mg(2+): aspartate 24, glutamate 26, histidine 182, and aspartate 187. Residue histidine 182 is the Proton donor/acceptor of the active site.

It belongs to the RNase T family. In terms of assembly, homodimer. Requires Mg(2+) as cofactor.

In terms of biological role, trims short 3' overhangs of a variety of RNA species, leaving a one or two nucleotide 3' overhang. Responsible for the end-turnover of tRNA: specifically removes the terminal AMP residue from uncharged tRNA (tRNA-C-C-A). Also appears to be involved in tRNA biosynthesis. The polypeptide is Ribonuclease T (Marinobacter nauticus (strain ATCC 700491 / DSM 11845 / VT8) (Marinobacter aquaeolei)).